The sequence spans 792 residues: Phenylalanine--tRNA ligase beta subunit (792 aa).

The 111-residue stretch at 38–148 (NTKLAGFIVA…DDYKVGNKFF (111 aa)) folds into the tRNA-binding domain. In terms of domain architecture, B5 spans 406 to 482 (EADTKVSFDY…RIYGYDKIKE (77 aa)). Mg(2+)-binding residues include D460, D466, E469, and E470. One can recognise an FDX-ACB domain in the interval 698 to 790 (YKHQSVKRDF…VHKNTGGILR (93 aa)).

Belongs to the phenylalanyl-tRNA synthetase beta subunit family. Type 1 subfamily. In terms of assembly, tetramer of two alpha and two beta subunits. Mg(2+) is required as a cofactor.

Its subcellular location is the cytoplasm. The catalysed reaction is tRNA(Phe) + L-phenylalanine + ATP = L-phenylalanyl-tRNA(Phe) + AMP + diphosphate + H(+). The polypeptide is Phenylalanine--tRNA ligase beta subunit (Wolbachia sp. subsp. Brugia malayi (strain TRS)).